The chain runs to 184 residues: GTP cyclohydrolase 1 (184 aa).

3 residues coordinate Zn(2+): cysteine 75, histidine 78, and cysteine 146.

The protein belongs to the GTP cyclohydrolase I family. Toroid-shaped homodecamer, composed of two pentamers of five dimers.

The enzyme catalyses GTP + H2O = 7,8-dihydroneopterin 3'-triphosphate + formate + H(+). It participates in cofactor biosynthesis; 7,8-dihydroneopterin triphosphate biosynthesis; 7,8-dihydroneopterin triphosphate from GTP: step 1/1. The polypeptide is GTP cyclohydrolase 1 (Pseudoalteromonas atlantica (strain T6c / ATCC BAA-1087)).